The chain runs to 290 residues: Metallo-beta-lactamase L1 type 3 (290 aa).

The signal sequence occupies residues 1-21 (MRSTLLAFALAVALPAAHTSA). A propeptide spanning residues 22-33 (AEVPLPQLRAYT) is cleaved from the precursor. Residues H105, H107, D109, H110, and H181 each coordinate Zn(2+). D205 serves as a coordination point for substrate. Residues C239 and C267 are joined by a disulfide bond. H246 lines the Zn(2+) pocket.

This sequence belongs to the metallo-beta-lactamase superfamily. Class-B beta-lactamase family. Homotetramer. Zn(2+) is required as a cofactor.

It localises to the periplasm. It carries out the reaction a beta-lactam + H2O = a substituted beta-amino acid. With respect to regulation, inhibited by Hg(2+) or Cu(2+), and by chelating agents such as EDTA and O-phenanthroline. Reduced enzymatic activity in presence of cobalt, nickel, cadmium, and manganese. In terms of biological role, confers resistance to the different beta-lactams antibiotics (penicillin, cephalosporin and carbapenem) via the hydrolysis of the beta-lactam ring. The chain is Metallo-beta-lactamase L1 type 3 from Stenotrophomonas maltophilia (Pseudomonas maltophilia).